A 185-amino-acid chain; its full sequence is Ribosome-recycling factor (185 aa).

This sequence belongs to the RRF family.

The protein localises to the cytoplasm. In terms of biological role, responsible for the release of ribosomes from messenger RNA at the termination of protein biosynthesis. May increase the efficiency of translation by recycling ribosomes from one round of translation to another. The polypeptide is Ribosome-recycling factor (Geobacter sp. (strain M21)).